The primary structure comprises 230 residues: MNYEGKTKIVKVTGDYALLEFKDDITAGDGLKHDVLTGKGSICAETTAILMKYLSEKDIKTHLVEYIPPRTLKVIPLKMFPLEVVVRLKKAGSFVRRYGGAEGEDLPVPLVEFFIKDDERHDPMVCVDHLEILGIATKKQAEKMKEAAVKITLALKEFFERANFELWDIKYEFGLDKDGNVVLGDEISPDTFRLRNKGEIFDKDVYRRDLGDPLKKYREVLELCRSLNSQ.

This sequence belongs to the SAICAR synthetase family.

The catalysed reaction is 5-amino-1-(5-phospho-D-ribosyl)imidazole-4-carboxylate + L-aspartate + ATP = (2S)-2-[5-amino-1-(5-phospho-beta-D-ribosyl)imidazole-4-carboxamido]succinate + ADP + phosphate + 2 H(+). It participates in purine metabolism; IMP biosynthesis via de novo pathway; 5-amino-1-(5-phospho-D-ribosyl)imidazole-4-carboxamide from 5-amino-1-(5-phospho-D-ribosyl)imidazole-4-carboxylate: step 1/2. The sequence is that of Phosphoribosylaminoimidazole-succinocarboxamide synthase from Thermotoga sp. (strain RQ2).